Consider the following 203-residue polypeptide: Flagellar transcriptional regulator FlhC (203 aa).

Positions 161, 164, 181, and 184 each coordinate Zn(2+).

Belongs to the FlhC family. In terms of assembly, heterohexamer composed of two FlhC and four FlhD subunits. Each FlhC binds a FlhD dimer, forming a heterotrimer, and a hexamer assembles by dimerization of two heterotrimers. Zn(2+) is required as a cofactor.

The protein localises to the cytoplasm. Its function is as follows. Functions in complex with FlhD as a master transcriptional regulator that regulates transcription of several flagellar and non-flagellar operons by binding to their promoter region. Activates expression of class 2 flagellar genes, including fliA, which is a flagellum-specific sigma factor that turns on the class 3 genes. Also regulates genes whose products function in a variety of physiological pathways. The chain is Flagellar transcriptional regulator FlhC from Cupriavidus necator (strain ATCC 17699 / DSM 428 / KCTC 22496 / NCIMB 10442 / H16 / Stanier 337) (Ralstonia eutropha).